Here is a 188-residue protein sequence, read N- to C-terminus: MAKINGNEIRPGYVIEHDGGLWVAVRTNTVKPGKGGAYNQVELKNLINGTKLNERFRSAETVEQIRLDLKDFSFLYEQDDALVFMDTQSYEQLELNKDFVGDRAAFLQDGMMVTVQLYEERPIGISLPDQVTLTITEADPVVKGQTAAASYKPAVLKNGIRVLVPPFIGAGERIIVDTNEITYVRRAD.

This sequence belongs to the elongation factor P family.

The protein resides in the cytoplasm. It participates in protein biosynthesis; polypeptide chain elongation. Its function is as follows. Involved in peptide bond synthesis. Stimulates efficient translation and peptide-bond synthesis on native or reconstituted 70S ribosomes in vitro. Probably functions indirectly by altering the affinity of the ribosome for aminoacyl-tRNA, thus increasing their reactivity as acceptors for peptidyl transferase. This chain is Elongation factor P 1, found in Mesorhizobium japonicum (strain LMG 29417 / CECT 9101 / MAFF 303099) (Mesorhizobium loti (strain MAFF 303099)).